Here is a 351-residue protein sequence, read N- to C-terminus: UDP-N-acetylglucosamine--N-acetylmuramyl-(pentapeptide) pyrophosphoryl-undecaprenol N-acetylglucosamine transferase (351 aa).

Residues 13-15 (TGG), asparagine 125, arginine 161, serine 189, isoleucine 241, 260-265 (ALTVCE), and glutamine 285 contribute to the UDP-N-acetyl-alpha-D-glucosamine site.

This sequence belongs to the glycosyltransferase 28 family. MurG subfamily.

Its subcellular location is the cell inner membrane. It carries out the reaction di-trans,octa-cis-undecaprenyl diphospho-N-acetyl-alpha-D-muramoyl-L-alanyl-D-glutamyl-meso-2,6-diaminopimeloyl-D-alanyl-D-alanine + UDP-N-acetyl-alpha-D-glucosamine = di-trans,octa-cis-undecaprenyl diphospho-[N-acetyl-alpha-D-glucosaminyl-(1-&gt;4)]-N-acetyl-alpha-D-muramoyl-L-alanyl-D-glutamyl-meso-2,6-diaminopimeloyl-D-alanyl-D-alanine + UDP + H(+). It functions in the pathway cell wall biogenesis; peptidoglycan biosynthesis. Its function is as follows. Cell wall formation. Catalyzes the transfer of a GlcNAc subunit on undecaprenyl-pyrophosphoryl-MurNAc-pentapeptide (lipid intermediate I) to form undecaprenyl-pyrophosphoryl-MurNAc-(pentapeptide)GlcNAc (lipid intermediate II). In Haemophilus influenzae (strain PittEE), this protein is UDP-N-acetylglucosamine--N-acetylmuramyl-(pentapeptide) pyrophosphoryl-undecaprenol N-acetylglucosamine transferase.